The chain runs to 188 residues: PRA1 family protein 3 (188 aa).

M1 bears the N-acetylmethionine mark. At 1–35 (MDVNIAPLRAWDDFFPGSDRFAQPDFRDISKWNNR) the chain is on the cytoplasmic side. A run of 2 helical transmembrane segments spans residues 36 to 56 (VVSN…MMIS) and 57 to 77 (VVGF…VLVF). Over 78 to 93 (TGFVWAAHNKDALRRL) the chain is Cytoplasmic. The next 2 membrane-spanning stretches (helical) occupy residues 94 to 114 (KKRY…FLIS) and 115 to 135 (MFGG…LMFI). The segment at 103-117 (MVVMLASYFLISMFG) is required for homodimer formation and heterodimer formation with ARL6IP1. At 136 to 188 (HASLRLRNLKNKLENKMEGIGLKRTPMGIVLDALEQQEEGINRLTDYISKVKE) the chain is on the cytoplasmic side. The tract at residues 136-188 (HASLRLRNLKNKLENKMEGIGLKRTPMGIVLDALEQQEEGINRLTDYISKVKE) is targeting to endoplasmic reticulum membrane.

Belongs to the PRA1 family. Homodimer. Heterodimer with ARL6IP1. Forms multimers. Interacts with ARL6. Interacts with prenylated RAB1A and RAB3A. Interacts with SLC1A1/EAAC1. Interacts with RTN2 (via first transmembrane domain). Does not interact with VAMP1, VAMP2 or VAMP3.

Its subcellular location is the endoplasmic reticulum membrane. It is found in the cell membrane. The protein localises to the cytoplasm. The protein resides in the cytoskeleton. In terms of biological role, regulates intracellular concentrations of taurine and glutamate. Negatively modulates SLC1A1/EAAC1 glutamate transport activity by decreasing its affinity for glutamate in a PKC activity-dependent manner. Plays a role in the retention of SLC1A1/EAAC1 in the endoplasmic reticulum. This chain is PRA1 family protein 3 (ARL6IP5), found in Macaca fascicularis (Crab-eating macaque).